The following is a 123-amino-acid chain: Small ribosomal subunit protein uS12cz/uS12cy (123 aa).

Belongs to the universal ribosomal protein uS12 family. As to quaternary structure, part of the 30S ribosomal subunit.

The protein resides in the plastid. Its subcellular location is the chloroplast. Its function is as follows. With S4 and S5 plays an important role in translational accuracy. Located at the interface of the 30S and 50S subunits. This chain is Small ribosomal subunit protein uS12cz/uS12cy (rps12-A), found in Angiopteris evecta (Mule's foot fern).